The sequence spans 407 residues: B3 domain-containing protein Os07g0183200 (407 aa).

The TF-B3 DNA-binding region spans Phe-124–Arg-227.

Its subcellular location is the nucleus. In Oryza sativa subsp. japonica (Rice), this protein is B3 domain-containing protein Os07g0183200.